Here is a 138-residue protein sequence, read N- to C-terminus: MRHGIAGRKLGVTSSHRQAMFRNMAVALIKHEQITTTLPKAKELRPVAEKLITLGKRGGLHARRQAYAQLRDEVIVTKLFSAIAERYKARQGGYTRVLKAGVRYGDAASMAVIELVDRDVSAKGQDSGPRPERDETEE.

The protein belongs to the bacterial ribosomal protein bL17 family. Part of the 50S ribosomal subunit. Contacts protein L32.

The protein is Large ribosomal subunit protein bL17 of Granulibacter bethesdensis (strain ATCC BAA-1260 / CGDNIH1).